Here is a 437-residue protein sequence, read N- to C-terminus: tRNA(Ile)-lysidine synthase (437 aa).

Residue 22–27 (SGGLDS) coordinates ATP.

This sequence belongs to the tRNA(Ile)-lysidine synthase family.

The protein localises to the cytoplasm. It carries out the reaction cytidine(34) in tRNA(Ile2) + L-lysine + ATP = lysidine(34) in tRNA(Ile2) + AMP + diphosphate + H(+). Its function is as follows. Ligates lysine onto the cytidine present at position 34 of the AUA codon-specific tRNA(Ile) that contains the anticodon CAU, in an ATP-dependent manner. Cytidine is converted to lysidine, thus changing the amino acid specificity of the tRNA from methionine to isoleucine. The sequence is that of tRNA(Ile)-lysidine synthase from Xylella fastidiosa (strain 9a5c).